Here is a 254-residue protein sequence, read N- to C-terminus: Hydroxyacylglutathione hydrolase (254 aa).

Residues histidine 53, histidine 55, aspartate 57, histidine 58, histidine 111, aspartate 128, and histidine 166 each coordinate Zn(2+).

The protein belongs to the metallo-beta-lactamase superfamily. Glyoxalase II family. As to quaternary structure, monomer. Zn(2+) serves as cofactor.

It catalyses the reaction an S-(2-hydroxyacyl)glutathione + H2O = a 2-hydroxy carboxylate + glutathione + H(+). Its pathway is secondary metabolite metabolism; methylglyoxal degradation; (R)-lactate from methylglyoxal: step 2/2. Functionally, thiolesterase that catalyzes the hydrolysis of S-D-lactoyl-glutathione to form glutathione and D-lactic acid. This chain is Hydroxyacylglutathione hydrolase, found in Aeromonas hydrophila subsp. hydrophila (strain ATCC 7966 / DSM 30187 / BCRC 13018 / CCUG 14551 / JCM 1027 / KCTC 2358 / NCIMB 9240 / NCTC 8049).